The primary structure comprises 310 residues: Thioesterase pytI (310 aa).

Transmembrane regions (helical) follow at residues 14-34 (SLTP…YFAL) and 95-115 (LLGG…IFVA). Residues 168–195 (TLSDDASTTTSSDNSRASTDHGADSEVE) form a disordered region. Over residues 170-184 (SDDASTTTSSDNSRA) the composition is skewed to low complexity.

It belongs to the AMT4 thioesterase family.

It is found in the membrane. It functions in the pathway secondary metabolite biosynthesis. In terms of biological role, thioesterase; part of the gene cluster that mediates the biosynthesis of pyranterreones, a family of antioxidative compounds. The first step of pyranonigrins biosynthesis is performed by the hybrid PKS-NRPS synthetase pytA that condenses 4 malonyl-CoA units ato the acetyl starter unit by the modular PKS of pytA. The acyl chain is then connected to an L-serine through the amide bond by the modular NRPS of pytA. A tetramic acid is formed and released from the PKS-NRPS pytA to give pyranterreone 5 with the help of the thioesterase pytI. Pyranterreone 5 could be methylated by pytC to afford pyranterreone 6. Both pyranterreones 5 and 6 are subsequently oxidized by the FAD-linked oxidoreductase pytB and the cytochrome P450 monooxygenase pytD to form the fused gamma-pyrone core, resulting in pyranterreones 7 and 11, respectively. The hydroxy group at C-8 of pyranterreones 7 and 11 are dehydrated by the aspartyl protease pytH to form a delta-7 double bond to give pyranterreones 3 and 1, 2 accordingly. The exo-methylene of pyranterreone 3 could be reduced into a pendant methyl by reductase pytE to provide pyranterreone 4, also known as cordylactam. Pyranterreone 4 can be reconverted to pyranterreone 3 through pytB-catalyzed dehydrogenation or further oxidized to pyranterreones 9 and 10. In Aspergillus terreus, this protein is Thioesterase pytI.